The following is a 361-amino-acid chain: Caffeic acid 3-O-methyltransferase 1 (361 aa).

128–134 (MNQDKVL) is a substrate binding site. The substrate binding stretch occupies residues 160-178 (AFEYHGTDPRFNKVFNQGM). Residues Gly206, Asp229, Asp249, Met250, and Lys263 each contribute to the S-adenosyl-L-methionine site. The active-site Proton acceptor is His267.

The protein belongs to the class I-like SAM-binding methyltransferase superfamily. Cation-independent O-methyltransferase family. COMT subfamily. Homodimer.

The catalysed reaction is (E)-caffeate + S-adenosyl-L-methionine = (E)-ferulate + S-adenosyl-L-homocysteine + H(+). It functions in the pathway aromatic compound metabolism; phenylpropanoid biosynthesis. In terms of biological role, catalyzes the conversion of caffeic acid to ferulic acid and of 5-hydroxyferulic acid to sinapic acid. The resulting products may subsequently be converted to the corresponding alcohols that are incorporated into lignins. The polypeptide is Caffeic acid 3-O-methyltransferase 1 (COMT1) (Ocimum basilicum (Sweet basil)).